The primary structure comprises 166 residues: MFPMVTEFMNYGQQTIRAARYIGQGFMITLSHANRLPVTIQYPYEKLITSERFRGRIHFEFDKCIACEVCVRVCPMDLPVVDWKLETDIRKKRLLNYSIDFGICIFCGNCVEYCPTNCLSMTEEYELSTYDRHELNYNQIALGRLPMSIIDDYTIRTILNLPEIKT.

4Fe-4S ferredoxin-type domains are found at residues 55 to 84 and 95 to 124; these read GRIH…VDWK and LNYS…MTEE. Residues C64, C67, C70, C74, C104, C107, C110, and C114 each coordinate [4Fe-4S] cluster.

It belongs to the complex I 23 kDa subunit family. NDH is composed of at least 16 different subunits, 5 of which are encoded in the nucleus. [4Fe-4S] cluster serves as cofactor.

The protein resides in the plastid. It is found in the chloroplast thylakoid membrane. It carries out the reaction a plastoquinone + NADH + (n+1) H(+)(in) = a plastoquinol + NAD(+) + n H(+)(out). The enzyme catalyses a plastoquinone + NADPH + (n+1) H(+)(in) = a plastoquinol + NADP(+) + n H(+)(out). Functionally, NDH shuttles electrons from NAD(P)H:plastoquinone, via FMN and iron-sulfur (Fe-S) centers, to quinones in the photosynthetic chain and possibly in a chloroplast respiratory chain. The immediate electron acceptor for the enzyme in this species is believed to be plastoquinone. Couples the redox reaction to proton translocation, and thus conserves the redox energy in a proton gradient. This Steiractinia sodiroi protein is NAD(P)H-quinone oxidoreductase subunit I, chloroplastic.